The chain runs to 205 residues: Cell wall / vacuolar inhibitor of fructosidase 1 (205 aa).

The signal sequence occupies residues 1–23 (MKMMKVMMLIVMMMMVMVMVSEG). Disulfide bonds link cysteine 30–cysteine 39 and cysteine 93–cysteine 134. Residues asparagine 139 and asparagine 156 are each glycosylated (N-linked (GlcNAc...) asparagine).

The protein belongs to the PMEI family. Mostly expressed in roots, senescent leaves and flowers (in sepals), and, to a lower extent, in stems, specifically in the vascular tissues (e.g. in the phloem).

Its subcellular location is the vacuole. Functionally, inhibits fructosidases from vacuoles (vacuolar invertase VI). The chain is Cell wall / vacuolar inhibitor of fructosidase 1 (C/VIF1) from Arabidopsis thaliana (Mouse-ear cress).